We begin with the raw amino-acid sequence, 151 residues long: Small ribosomal subunit protein uS15 (151 aa).

This sequence belongs to the universal ribosomal protein uS15 family. As to quaternary structure, component of the small ribosomal subunit. Mature ribosomes consist of a small (40S) and a large (60S) subunit. The 40S subunit contains about 32 different proteins and 1 molecule of RNA (18S). The 60S subunit contains 45 different proteins and 3 molecules of RNA (25S, 5.8S and 5S).

The protein resides in the cytoplasm. Functionally, component of the ribosome, a large ribonucleoprotein complex responsible for the synthesis of proteins in the cell. The small ribosomal subunit (SSU) binds messenger RNAs (mRNAs) and translates the encoded message by selecting cognate aminoacyl-transfer RNA (tRNA) molecules. The large subunit (LSU) contains the ribosomal catalytic site termed the peptidyl transferase center (PTC), which catalyzes the formation of peptide bonds, thereby polymerizing the amino acids delivered by tRNAs into a polypeptide chain. The nascent polypeptides leave the ribosome through a tunnel in the LSU and interact with protein factors that function in enzymatic processing, targeting, and the membrane insertion of nascent chains at the exit of the ribosomal tunnel. This Candida albicans (strain SC5314 / ATCC MYA-2876) (Yeast) protein is Small ribosomal subunit protein uS15 (RPS13).